The primary structure comprises 926 residues: Eukaryotic translation initiation factor 3 subunit C (926 aa).

Disordered stretches follow at residues 1 to 27 (MSRFFATGSDSESEESSSADEITPKAA), 157 to 251 (ASYK…NDGT), and 266 to 300 (EKASDRKKDDRRRRHKKKERIEEEAEEEGEAEEGG). Basic and acidic residues predominate over residues 200 to 210 (KPQEEEKKAPE). Positions 220-235 (DEESESDDDEDSEDWA) are enriched in acidic residues. Residues 274 to 283 (DDRRRRHKKK) show a composition bias toward basic residues. Residues 287–299 (EEEAEEEGEAEEG) show a composition bias toward acidic residues. The PCI domain occupies 672–848 (FHMHINLELL…QTVVMHRTEP (177 aa)). Residues 890–919 (GGYQQKQGYQRGDQKGGYQQKQNYQRGGYR) show a composition bias toward low complexity. The disordered stretch occupies residues 890–926 (GGYQQKQGYQRGDQKGGYQQKQNYQRGGYRNQNQSSY).

This sequence belongs to the eIF-3 subunit C family. Component of the eukaryotic translation initiation factor 3 (eIF-3) complex, which is composed of 13 subunits: eif3a, eif3b, eif3c, eif3d, eif3e, eif3f, eif3g, eif3h, eif3i, eif3j, eif3k, eif3l and eif3m.

It is found in the cytoplasm. In terms of biological role, component of the eukaryotic translation initiation factor 3 (eIF-3) complex, which is involved in protein synthesis of a specialized repertoire of mRNAs and, together with other initiation factors, stimulates binding of mRNA and methionyl-tRNAi to the 40S ribosome. The eIF-3 complex specifically targets and initiates translation of a subset of mRNAs involved in cell proliferation. The polypeptide is Eukaryotic translation initiation factor 3 subunit C (eif3c) (Danio rerio (Zebrafish)).